A 64-amino-acid chain; its full sequence is Long neurotoxin MS2 (64 aa).

5 cysteine pairs are disulfide-bonded: cysteine 3–cysteine 24, cysteine 6–cysteine 11, cysteine 17–cysteine 41, cysteine 45–cysteine 57, and cysteine 58–cysteine 63.

Belongs to the three-finger toxin family. Ancestral subfamily. Expressed by the venom gland.

Its subcellular location is the secreted. Produces peripheral paralysis by blocking neuromuscular transmission at the postsynaptic site. Very weak inhibitor of the endogenous nicotinic acetylcholine receptors (nAChR) in the human rhabdomyosarcoma TE 671 cell line. Not toxic to mice by intraperitoneal injection or to zebrafish by injection at the back of the dorsolateral region. This chain is Long neurotoxin MS2, found in Micrurus surinamensis (Surinam coral snake).